The primary structure comprises 149 residues: Protein SprT-like (149 aa).

The SprT-like domain occupies 4-144 (TDYVKQVSLE…GLCRGKLLLV (141 aa)). Histidine 64 is a Zn(2+) binding site. Residue glutamate 65 is part of the active site. Histidine 68 contributes to the Zn(2+) binding site.

It belongs to the SprT family. Zn(2+) is required as a cofactor.

It localises to the cytoplasm. This is Protein SprT-like from Streptococcus pneumoniae serotype 4 (strain ATCC BAA-334 / TIGR4).